Consider the following 308-residue polypeptide: Probable serine/threonine-protein kinase KIN28 homolog (308 aa).

The 291-residue stretch at tyrosine 4–phenylalanine 294 folds into the Protein kinase domain. ATP-binding positions include leucine 10–isoleucine 18 and lysine 46. Aspartate 139 functions as the Proton acceptor in the catalytic mechanism.

This sequence belongs to the protein kinase superfamily. CMGC Ser/Thr protein kinase family. CDC2/CDKX subfamily. In terms of assembly, component of the TFIIH holo complex.

It is found in the nucleus. It catalyses the reaction [DNA-directed RNA polymerase] + ATP = phospho-[DNA-directed RNA polymerase] + ADP + H(+). Functionally, protein kinase component of transcription factor IIH (TFIIH) which phosphorylates the C-terminal domain of RNA polymerase II during transition from transcription to elongation after preinitiation complex (PIC) formation, thereby positively regulating transcription. Essential for both basal and activated transcription, and is involved in nucleotide excision repair (NER) of damaged DNA. The sequence is that of Probable serine/threonine-protein kinase KIN28 homolog (KIN28) from Encephalitozoon cuniculi (strain GB-M1) (Microsporidian parasite).